Here is a 243-residue protein sequence, read N- to C-terminus: ATP-dependent dethiobiotin synthetase BioD (243 aa).

12 to 17 (DVGKTL) contacts ATP. Thr-16 contributes to the Mg(2+) binding site. Lys-37 is an active-site residue. Ser-41 contacts substrate. Residues Asp-54, 115–118 (EGCG), and 179–180 (NM) each bind ATP. The Mg(2+) site is built by Asp-54 and Glu-115.

Belongs to the dethiobiotin synthetase family. Homodimer. It depends on Mg(2+) as a cofactor.

It is found in the cytoplasm. It carries out the reaction (7R,8S)-7,8-diammoniononanoate + CO2 + ATP = (4R,5S)-dethiobiotin + ADP + phosphate + 3 H(+). The protein operates within cofactor biosynthesis; biotin biosynthesis; biotin from 7,8-diaminononanoate: step 1/2. Catalyzes a mechanistically unusual reaction, the ATP-dependent insertion of CO2 between the N7 and N8 nitrogen atoms of 7,8-diaminopelargonic acid (DAPA, also called 7,8-diammoniononanoate) to form a ureido ring. In Caldicellulosiruptor saccharolyticus (strain ATCC 43494 / DSM 8903 / Tp8T 6331), this protein is ATP-dependent dethiobiotin synthetase BioD.